The chain runs to 67 residues: Large ribosomal subunit protein bL31 (67 aa).

The protein belongs to the bacterial ribosomal protein bL31 family. Type A subfamily. In terms of assembly, part of the 50S ribosomal subunit.

Its function is as follows. Binds the 23S rRNA. This chain is Large ribosomal subunit protein bL31, found in Finegoldia magna (strain ATCC 29328 / DSM 20472 / WAL 2508) (Peptostreptococcus magnus).